Consider the following 207-residue polypeptide: Protein GrpE (207 aa).

The interval 1 to 31 (MSEHQTPPEEDLTVANGDSAEAVSEPDVTVA) is disordered.

It belongs to the GrpE family. In terms of assembly, homodimer.

The protein localises to the cytoplasm. Functionally, participates actively in the response to hyperosmotic and heat shock by preventing the aggregation of stress-denatured proteins, in association with DnaK and GrpE. It is the nucleotide exchange factor for DnaK and may function as a thermosensor. Unfolded proteins bind initially to DnaJ; upon interaction with the DnaJ-bound protein, DnaK hydrolyzes its bound ATP, resulting in the formation of a stable complex. GrpE releases ADP from DnaK; ATP binding to DnaK triggers the release of the substrate protein, thus completing the reaction cycle. Several rounds of ATP-dependent interactions between DnaJ, DnaK and GrpE are required for fully efficient folding. This Synechococcus elongatus (strain ATCC 33912 / PCC 7942 / FACHB-805) (Anacystis nidulans R2) protein is Protein GrpE.